The following is a 581-amino-acid chain: Arginine--tRNA ligase (581 aa).

The short motif at 131-141 (ANPTGPLHVGH) is the 'HIGH' region element.

This sequence belongs to the class-I aminoacyl-tRNA synthetase family. Monomer.

It localises to the cytoplasm. It catalyses the reaction tRNA(Arg) + L-arginine + ATP = L-arginyl-tRNA(Arg) + AMP + diphosphate. The polypeptide is Arginine--tRNA ligase (Nitrosospira multiformis (strain ATCC 25196 / NCIMB 11849 / C 71)).